Consider the following 348-residue polypeptide: Phage-like element PBSX protein XkdT (348 aa).

Belongs to the Mu gp47/PBSX XkdT family.

This Bacillus subtilis (strain 168) protein is Phage-like element PBSX protein XkdT (xkdT).